The following is a 669-amino-acid chain: DNA ligase (669 aa).

NAD(+) contacts are provided by residues 32–36, 81–82, and Glu-113; these read DAEYD and SL. Lys-115 (N6-AMP-lysine intermediate) is an active-site residue. NAD(+) contacts are provided by Arg-136, Glu-173, Lys-290, and Lys-314. 4 residues coordinate Zn(2+): Cys-408, Cys-411, Cys-426, and Cys-432. Positions 592–669 constitute a BRCT domain; it reads AVDSALAGKI…DEQALIEFLK (78 aa).

The protein belongs to the NAD-dependent DNA ligase family. LigA subfamily. The cofactor is Mg(2+). Mn(2+) is required as a cofactor.

The catalysed reaction is NAD(+) + (deoxyribonucleotide)n-3'-hydroxyl + 5'-phospho-(deoxyribonucleotide)m = (deoxyribonucleotide)n+m + AMP + beta-nicotinamide D-nucleotide.. DNA ligase that catalyzes the formation of phosphodiester linkages between 5'-phosphoryl and 3'-hydroxyl groups in double-stranded DNA using NAD as a coenzyme and as the energy source for the reaction. It is essential for DNA replication and repair of damaged DNA. The polypeptide is DNA ligase (Vibrio cholerae serotype O1 (strain ATCC 39315 / El Tor Inaba N16961)).